Reading from the N-terminus, the 133-residue chain is Large ribosomal subunit protein bL20 (133 aa).

Belongs to the bacterial ribosomal protein bL20 family.

Its function is as follows. Binds directly to 23S ribosomal RNA and is necessary for the in vitro assembly process of the 50S ribosomal subunit. It is not involved in the protein synthesizing functions of that subunit. The protein is Large ribosomal subunit protein bL20 of Rubrobacter xylanophilus (strain DSM 9941 / JCM 11954 / NBRC 16129 / PRD-1).